The primary structure comprises 144 residues: Acylphosphatase-like protein MJ1331 (144 aa).

The Acylphosphatase-like domain maps to 8–100 (TYELRIYGNV…FPNGLNKIST (93 aa)).

In Methanocaldococcus jannaschii (strain ATCC 43067 / DSM 2661 / JAL-1 / JCM 10045 / NBRC 100440) (Methanococcus jannaschii), this protein is Acylphosphatase-like protein MJ1331.